A 261-amino-acid polypeptide reads, in one-letter code: tRNA pseudouridine synthase A 2 (261 aa).

The active-site Nucleophile is the D59. Substrate is bound at residue Y117.

It belongs to the tRNA pseudouridine synthase TruA family. In terms of assembly, homodimer.

It catalyses the reaction uridine(38/39/40) in tRNA = pseudouridine(38/39/40) in tRNA. Formation of pseudouridine at positions 38, 39 and 40 in the anticodon stem and loop of transfer RNAs. This chain is tRNA pseudouridine synthase A 2, found in Desulfotalea psychrophila (strain LSv54 / DSM 12343).